The chain runs to 31 residues: Cyclotide psybry C (31 aa).

Residues 1–31 (GFNPCGETCQIDQTCHAPGCTCSIANICVRN) constitute a cross-link (cyclopeptide (Gly-Asn)). Intrachain disulfides connect cysteine 5/cysteine 20, cysteine 9/cysteine 22, and cysteine 15/cysteine 28.

This is a cyclic peptide.

Its function is as follows. Probably participates in a plant defense mechanism. The chain is Cyclotide psybry C from Psychotria brachyceras.